A 185-amino-acid polypeptide reads, in one-letter code: ATP synthase subunit delta (185 aa).

It belongs to the ATPase delta chain family. In terms of assembly, F-type ATPases have 2 components, F(1) - the catalytic core - and F(0) - the membrane proton channel. F(1) has five subunits: alpha(3), beta(3), gamma(1), delta(1), epsilon(1). CF(0) has four main subunits: a(1), b(1), b'(1) and c(10-14). The alpha and beta chains form an alternating ring which encloses part of the gamma chain. F(1) is attached to F(0) by a central stalk formed by the gamma and epsilon chains, while a peripheral stalk is formed by the delta, b and b' chains.

The protein localises to the cellular thylakoid membrane. In terms of biological role, f(1)F(0) ATP synthase produces ATP from ADP in the presence of a proton or sodium gradient. F-type ATPases consist of two structural domains, F(1) containing the extramembraneous catalytic core and F(0) containing the membrane proton channel, linked together by a central stalk and a peripheral stalk. During catalysis, ATP synthesis in the catalytic domain of F(1) is coupled via a rotary mechanism of the central stalk subunits to proton translocation. Functionally, this protein is part of the stalk that links CF(0) to CF(1). It either transmits conformational changes from CF(0) to CF(1) or is implicated in proton conduction. This is ATP synthase subunit delta from Cyanothece sp. (strain PCC 7425 / ATCC 29141).